The chain runs to 510 residues: 2,3-bisphosphoglycerate-independent phosphoglycerate mutase (510 aa).

Residues aspartate 16 and serine 66 each coordinate Mn(2+). Residue serine 66 is the Phosphoserine intermediate of the active site. Substrate is bound by residues histidine 127, 156-157 (RD), arginine 186, arginine 192, 257-260 (RADR), and lysine 333. The Mn(2+) site is built by aspartate 400, histidine 404, aspartate 441, histidine 442, and histidine 460.

The protein belongs to the BPG-independent phosphoglycerate mutase family. Monomer. Mn(2+) serves as cofactor.

The enzyme catalyses (2R)-2-phosphoglycerate = (2R)-3-phosphoglycerate. Its pathway is carbohydrate degradation; glycolysis; pyruvate from D-glyceraldehyde 3-phosphate: step 3/5. Functionally, catalyzes the interconversion of 2-phosphoglycerate and 3-phosphoglycerate. The sequence is that of 2,3-bisphosphoglycerate-independent phosphoglycerate mutase from Gluconobacter oxydans (strain 621H) (Gluconobacter suboxydans).